The sequence spans 213 residues: Octanoyltransferase (213 aa).

The BPL/LPL catalytic domain maps to 35–213; it reads DKHGDAVLLL…ERHLPTLVGA (179 aa). Residues 73–80, 145–147, and 158–160 each bind substrate; these read RGGKITWH, AIG, and GFS. The Acyl-thioester intermediate role is filled by C176.

The protein belongs to the LipB family.

It is found in the cytoplasm. It carries out the reaction octanoyl-[ACP] + L-lysyl-[protein] = N(6)-octanoyl-L-lysyl-[protein] + holo-[ACP] + H(+). The protein operates within protein modification; protein lipoylation via endogenous pathway; protein N(6)-(lipoyl)lysine from octanoyl-[acyl-carrier-protein]: step 1/2. Functionally, catalyzes the transfer of endogenously produced octanoic acid from octanoyl-acyl-carrier-protein onto the lipoyl domains of lipoate-dependent enzymes. Lipoyl-ACP can also act as a substrate although octanoyl-ACP is likely to be the physiological substrate. The polypeptide is Octanoyltransferase (Salinispora arenicola (strain CNS-205)).